The chain runs to 158 residues: AP-1 complex subunit sigma-1A (158 aa).

Ser147 is subject to Phosphoserine.

Belongs to the adaptor complexes small subunit family. Adaptor protein complex 1 (AP-1) is a heterotetramer composed of two large adaptins (gamma-type subunit AP1G1 and beta-type subunit AP1B1), a medium adaptin (mu-type subunit AP1M1 or AP1M2) and a small adaptin (sigma-type subunit AP1S1 or AP1S2 or AP1S3). As to expression, widely expressed.

Its subcellular location is the golgi apparatus. The protein resides in the cytoplasmic vesicle membrane. The protein localises to the membrane. It is found in the clathrin-coated pit. Its function is as follows. Subunit of clathrin-associated adaptor protein complex 1 that plays a role in protein sorting in the late-Golgi/trans-Golgi network (TGN) and/or endosomes. The AP complexes mediate both the recruitment of clathrin to membranes and the recognition of sorting signals within the cytosolic tails of transmembrane cargo molecules. The sequence is that of AP-1 complex subunit sigma-1A (AP1S1) from Homo sapiens (Human).